Here is a 170-residue protein sequence, read N- to C-terminus: Translationally-controlled tumor protein homolog (170 aa).

The TCTP domain occupies Met-1 to Val-170.

Belongs to the TCTP family.

It is found in the cytoplasm. Its subcellular location is the cytoskeleton. Functionally, involved in protein synthesis. Involved in microtubule stabilization. The polypeptide is Translationally-controlled tumor protein homolog (Neurospora crassa (strain ATCC 24698 / 74-OR23-1A / CBS 708.71 / DSM 1257 / FGSC 987)).